Reading from the N-terminus, the 189-residue chain is Probable nicotinate-nucleotide adenylyltransferase (189 aa).

This sequence belongs to the NadD family.

The catalysed reaction is nicotinate beta-D-ribonucleotide + ATP + H(+) = deamido-NAD(+) + diphosphate. The protein operates within cofactor biosynthesis; NAD(+) biosynthesis; deamido-NAD(+) from nicotinate D-ribonucleotide: step 1/1. In terms of biological role, catalyzes the reversible adenylation of nicotinate mononucleotide (NaMN) to nicotinic acid adenine dinucleotide (NaAD). The protein is Probable nicotinate-nucleotide adenylyltransferase of Ruegeria sp. (strain TM1040) (Silicibacter sp.).